The sequence spans 407 residues: Peptidase T (407 aa).

H82 lines the Zn(2+) pocket. D84 is an active-site residue. Residue D143 participates in Zn(2+) binding. E177 functions as the Proton acceptor in the catalytic mechanism. 3 residues coordinate Zn(2+): E178, D200, and H382.

This sequence belongs to the peptidase M20B family. The cofactor is Zn(2+).

It localises to the cytoplasm. The enzyme catalyses Release of the N-terminal residue from a tripeptide.. In terms of biological role, cleaves the N-terminal amino acid of tripeptides. The sequence is that of Peptidase T from Streptococcus pyogenes serotype M6 (strain ATCC BAA-946 / MGAS10394).